The primary structure comprises 77 residues: U8-lycotoxin-Ls1t (77 aa).

Positions 1–20 are cleaved as a signal peptide; that stretch reads MKLIIFTGLVPFAIVSLIEA. Positions 21 to 26 are excised as a propeptide; the sequence is QAENEK.

Belongs to the neurotoxin 19 (CSTX) family. 08 (U8-Lctx) subfamily. Contains 4 disulfide bonds. In terms of tissue distribution, expressed by the venom gland.

The protein resides in the secreted. The sequence is that of U8-lycotoxin-Ls1t from Lycosa singoriensis (Wolf spider).